The sequence spans 353 residues: 2-oxoglutarate-Fe(II) type oxidoreductase ppzD (353 aa).

The Fe2OG dioxygenase domain maps to 181–292; sequence NTSELRLNHY…RYSVAYFGKP (112 aa). The Fe cation site is built by histidine 208, aspartate 210, and histidine 268. Arginine 283 serves as a coordination point for 2-oxoglutarate.

This sequence belongs to the iron/ascorbate-dependent oxidoreductase family. The cofactor is Fe(2+).

The enzyme catalyses L-proline + 2-oxoglutarate + O2 = trans-4-hydroxy-L-proline + succinate + CO2. The catalysed reaction is L-proline + 2-oxoglutarate + O2 = trans-3-hydroxy-L-proline + succinate + CO2. It catalyses the reaction D-proline + 2-oxoglutarate + O2 = cis-4-hydroxy-D-proline + succinate + CO2. It participates in secondary metabolite biosynthesis. 2-oxoglutarate-Fe(II) type oxidoreductase; part of the gene cluster that mediates the biosynthesis of pyrrolopyrazines, secondary metabolites showing insecticidal activity. Within the pathway, ppzD converts L-proline into trans-4-hydroxy-L-proline as a major product, yielding a key precursor for peramine biosynthesis. PpzD is also able to convert L-proline into trans-3-hydroxy-L-proline. The single multifunctional NRPS ppzA is sufficient to produce peramine via condensation of 1-pyrroline-5-carboxylate and arginine, N-methylation of the alpha-amino group of arginine and reduction of the thioester and the cyclization to form an iminium ion resulting in release from the peptide synthetase. Deprotonation of this intermediate and oxidation of the pyrroline ring would give rise to peramine. In Epichloe species that produce only peramine, the peramine synthetase gene is not localized in a gene cluster, in contrast to Metarhizium species that contain additional pyrrolopyrazine biosynthesis genes. The 2-oxoglutarate-Fe(II) type oxidoreductase ppzC hydroxylates peramine to yield the newly identified compound 8-hydroxyperamine whereas ppzD converts L-proline into trans-4-hydroxy-L-proline, a precursor of peramine biosynthesis. In Metarhizium rileyi (strain RCEF 4871) (Nomuraea rileyi), this protein is 2-oxoglutarate-Fe(II) type oxidoreductase ppzD.